Reading from the N-terminus, the 411-residue chain is Citrate synthase (411 aa).

Active-site residues include H304 and D363.

The protein belongs to the citrate synthase family.

The catalysed reaction is oxaloacetate + acetyl-CoA + H2O = citrate + CoA + H(+). It participates in carbohydrate metabolism; tricarboxylic acid cycle; isocitrate from oxaloacetate: step 1/2. The sequence is that of Citrate synthase (gltA) from Rickettsia parkeri.